A 175-amino-acid chain; its full sequence is Small ribosomal subunit protein uS5 (175 aa).

One can recognise an S5 DRBM domain in the interval Leu-11–Val-74.

Belongs to the universal ribosomal protein uS5 family. Part of the 30S ribosomal subunit. Contacts proteins S4 and S8.

In terms of biological role, with S4 and S12 plays an important role in translational accuracy. Located at the back of the 30S subunit body where it stabilizes the conformation of the head with respect to the body. The protein is Small ribosomal subunit protein uS5 of Rickettsia prowazekii (strain Madrid E).